Reading from the N-terminus, the 702-residue chain is Ribosomal RNA large subunit methyltransferase K/L (702 aa).

The THUMP domain maps to 43-154 (LVYQSLMWSR…KETASIALDL (112 aa)).

The protein belongs to the methyltransferase superfamily. RlmKL family.

The protein localises to the cytoplasm. The catalysed reaction is guanosine(2445) in 23S rRNA + S-adenosyl-L-methionine = N(2)-methylguanosine(2445) in 23S rRNA + S-adenosyl-L-homocysteine + H(+). The enzyme catalyses guanosine(2069) in 23S rRNA + S-adenosyl-L-methionine = N(2)-methylguanosine(2069) in 23S rRNA + S-adenosyl-L-homocysteine + H(+). Functionally, specifically methylates the guanine in position 2445 (m2G2445) and the guanine in position 2069 (m7G2069) of 23S rRNA. This Shigella dysenteriae serotype 1 (strain Sd197) protein is Ribosomal RNA large subunit methyltransferase K/L.